Here is a 327-residue protein sequence, read N- to C-terminus: Phenylalanine--tRNA ligase alpha subunit (327 aa).

Glu-252 contacts Mg(2+).

This sequence belongs to the class-II aminoacyl-tRNA synthetase family. Phe-tRNA synthetase alpha subunit type 1 subfamily. Tetramer of two alpha and two beta subunits. It depends on Mg(2+) as a cofactor.

Its subcellular location is the cytoplasm. It carries out the reaction tRNA(Phe) + L-phenylalanine + ATP = L-phenylalanyl-tRNA(Phe) + AMP + diphosphate + H(+). The chain is Phenylalanine--tRNA ligase alpha subunit from Yersinia pestis bv. Antiqua (strain Angola).